Here is a 417-residue protein sequence, read N- to C-terminus: Serine hydroxymethyltransferase (417 aa).

(6S)-5,6,7,8-tetrahydrofolate-binding positions include Leu122 and 126 to 128 (GHL). Lys230 carries the post-translational modification N6-(pyridoxal phosphate)lysine. 355–357 (SPF) serves as a coordination point for (6S)-5,6,7,8-tetrahydrofolate.

Belongs to the SHMT family. As to quaternary structure, homodimer. Pyridoxal 5'-phosphate serves as cofactor.

Its subcellular location is the cytoplasm. The enzyme catalyses (6R)-5,10-methylene-5,6,7,8-tetrahydrofolate + glycine + H2O = (6S)-5,6,7,8-tetrahydrofolate + L-serine. Its pathway is one-carbon metabolism; tetrahydrofolate interconversion. It participates in amino-acid biosynthesis; glycine biosynthesis; glycine from L-serine: step 1/1. Its function is as follows. Catalyzes the reversible interconversion of serine and glycine with tetrahydrofolate (THF) serving as the one-carbon carrier. This reaction serves as the major source of one-carbon groups required for the biosynthesis of purines, thymidylate, methionine, and other important biomolecules. Also exhibits THF-independent aldolase activity toward beta-hydroxyamino acids, producing glycine and aldehydes, via a retro-aldol mechanism. The protein is Serine hydroxymethyltransferase of Francisella tularensis subsp. mediasiatica (strain FSC147).